Consider the following 579-residue polypeptide: ATP-dependent RNA helicase SUV3, mitochondrial (579 aa).

The transit peptide at 1-59 (MAVAAALLRRRALYSALASPSWLHDTSSCYICSISGTHSLVNHPNLRLQRGYHNSGKFD) directs the protein to the mitochondrion. The 142-residue stretch at 72–213 (NAREKKRNVF…QRILEPTGDV (142 aa)) folds into the Helicase ATP-binding domain. 85-92 (GPTNSGKT) contacts ATP. Residues 214–388 (VTVQYYERLS…GLFPTFDVLS (175 aa)) form the Helicase C-terminal domain. An N-linked (GlcNAc...) asparagine glycan is attached at Asn-309.

The protein belongs to the helicase family. As to quaternary structure, homodimer; in free form. Component of the mitochondrial degradosome (mtEXO) complex which is a heteropentamer containing 2 copies of SUPV3L1 and 3 copies of PNPT1. Requires Mg(2+) as cofactor. It depends on Mn(2+) as a cofactor.

It is found in the nucleus. It localises to the mitochondrion matrix. Its subcellular location is the mitochondrion nucleoid. The enzyme catalyses ATP + H2O = ADP + phosphate + H(+). Its function is as follows. Major helicase player in mitochondrial RNA metabolism. Component of the mitochondrial degradosome (mtEXO) complex, that degrades 3' overhang double-stranded RNA with a 3'-to-5' directionality in an ATP-dependent manner. ATPase and ATP-dependent multisubstrate helicase, able to unwind double-stranded (ds) DNA and RNA, and RNA/DNA heteroduplexes in the 5'-to-3' direction. Plays a role in the RNA surveillance system in mitochondria; regulates the stability of mature mRNAs, the removal of aberrantly formed mRNAs and the rapid degradation of non coding processing intermediates. Confers salinity and drought stress tolerances by maintaining both photosynthesis and antioxidant machinery, probably via an increase in plant hormones levels such as gibberellic acid (GA(3)), the cytokinin zeatin (Z) and indole-3-acetic acid (IAA). In Oryza sativa subsp. japonica (Rice), this protein is ATP-dependent RNA helicase SUV3, mitochondrial.